A 339-amino-acid chain; its full sequence is Ketol-acid reductoisomerase (NADP(+)) (339 aa).

Residues 1–182 (MRVYYDRDAD…GGGRSGIIET (182 aa)) form the KARI N-terminal Rossmann domain. Residues 24–27 (YGSQ), Lys-48, Ser-51, Thr-53, and 83–86 (DELQ) contribute to the NADP(+) site. His-108 is a catalytic residue. Gly-134 serves as a coordination point for NADP(+). Residues 183-328 (NFREECETDL…AKLRGMMPWI (146 aa)) form the KARI C-terminal knotted domain. Positions 191, 195, 227, and 231 each coordinate Mg(2+). Ser-252 is a substrate binding site.

It belongs to the ketol-acid reductoisomerase family. Mg(2+) is required as a cofactor.

The enzyme catalyses (2R)-2,3-dihydroxy-3-methylbutanoate + NADP(+) = (2S)-2-acetolactate + NADPH + H(+). The catalysed reaction is (2R,3R)-2,3-dihydroxy-3-methylpentanoate + NADP(+) = (S)-2-ethyl-2-hydroxy-3-oxobutanoate + NADPH + H(+). Its pathway is amino-acid biosynthesis; L-isoleucine biosynthesis; L-isoleucine from 2-oxobutanoate: step 2/4. The protein operates within amino-acid biosynthesis; L-valine biosynthesis; L-valine from pyruvate: step 2/4. Its function is as follows. Involved in the biosynthesis of branched-chain amino acids (BCAA). Catalyzes an alkyl-migration followed by a ketol-acid reduction of (S)-2-acetolactate (S2AL) to yield (R)-2,3-dihydroxy-isovalerate. In the isomerase reaction, S2AL is rearranged via a Mg-dependent methyl migration to produce 3-hydroxy-3-methyl-2-ketobutyrate (HMKB). In the reductase reaction, this 2-ketoacid undergoes a metal-dependent reduction by NADPH to yield (R)-2,3-dihydroxy-isovalerate. This Rhizobium etli (strain ATCC 51251 / DSM 11541 / JCM 21823 / NBRC 15573 / CFN 42) protein is Ketol-acid reductoisomerase (NADP(+)).